We begin with the raw amino-acid sequence, 421 residues long: ATP-dependent RNA helicase RhlB (421 aa).

Residues 9–37 (QKFSDFALHAKVIEALENKGFHYCTPIQA) carry the Q motif motif. The 180-residue stretch at 40–219 (LPLTLAGRDV…FEQMNNAEYV (180 aa)) folds into the Helicase ATP-binding domain. ATP is bound at residue 53–60 (AQTGTGKT). The DEAD box signature appears at 165–168 (DEAD). The region spanning 245-390 (RLLQTLIEEE…QSKYNPDALL (146 aa)) is the Helicase C-terminal domain. Positions 386-421 (PDALLSELPPPKRLTRARSGNGPRRTGAPRNRRRPG) are disordered. Residues 405 to 414 (GNGPRRTGAP) show a composition bias toward low complexity.

Belongs to the DEAD box helicase family. RhlB subfamily. In terms of assembly, component of the RNA degradosome, which is a multiprotein complex involved in RNA processing and mRNA degradation.

The protein resides in the cytoplasm. It catalyses the reaction ATP + H2O = ADP + phosphate + H(+). Its function is as follows. DEAD-box RNA helicase involved in RNA degradation. Has RNA-dependent ATPase activity and unwinds double-stranded RNA. The protein is ATP-dependent RNA helicase RhlB of Enterobacter sp. (strain 638).